The primary structure comprises 514 residues: UDP-N-acetylmuramate--L-alanine ligase (514 aa).

127-133 contacts ATP; that stretch reads GTHGKTT. Residues 495–505 show a composition bias toward low complexity; the sequence is IGGTIPDIPGG. A disordered region spans residues 495-514; the sequence is IGGTIPDIPGGSTPDASAAG.

This sequence belongs to the MurCDEF family.

It is found in the cytoplasm. The enzyme catalyses UDP-N-acetyl-alpha-D-muramate + L-alanine + ATP = UDP-N-acetyl-alpha-D-muramoyl-L-alanine + ADP + phosphate + H(+). It participates in cell wall biogenesis; peptidoglycan biosynthesis. In terms of biological role, cell wall formation. This chain is UDP-N-acetylmuramate--L-alanine ligase, found in Salinispora tropica (strain ATCC BAA-916 / DSM 44818 / JCM 13857 / NBRC 105044 / CNB-440).